The following is a 394-amino-acid chain: MSQAPYFVPRAPYAEDPSKSKGRRFKEDESRTRTPFARDRDRIIHTSAFRRLKEKTQVFVAHEGDNFRTRLTHTLEVAQVARSLATALGLDADLAETIALAHDLGHPPFGHAGEDELEIQMREYGGFDHNVQTFRVVTELEHRYPDFIGLNLTWETLEGVIKHNGPVTNKLGKPSWKAISKYDNEYELGLGTWASAEAQVAALADDIAYNNHDVDDGVTAGLFTLDDLMDVPLIGPILAAVKSERPDLDARLTHLEAVRRMIGAMVDDVMGETLHRAAASGVQSADDVRALDHALVAFSSDMAEDLARLRGFLYERMYRHWRVNRTRSQARRILGEMFALFLREPEVLPTVWFAKSQNRDEAGRARVVCDYIAGMTDRFAIEEHRKLFHLDVWN.

Residues 1–36 form a disordered region; sequence MSQAPYFVPRAPYAEDPSKSKGRRFKEDESRTRTPF. The segment covering 25-36 has biased composition (basic and acidic residues); sequence FKEDESRTRTPF. The HD domain maps to 70-210; the sequence is RLTHTLEVAQ…AALADDIAYN (141 aa).

The protein belongs to the dGTPase family. Type 2 subfamily.

The sequence is that of Deoxyguanosinetriphosphate triphosphohydrolase-like protein from Caulobacter vibrioides (strain ATCC 19089 / CIP 103742 / CB 15) (Caulobacter crescentus).